Here is a 401-residue protein sequence, read N- to C-terminus: NADH-dependent flavin oxidoreductase iliE (401 aa).

FMN contacts are provided by residues 25-28 (ASMS) and glutamine 107. Residue 188–191 (HAAH) coordinates substrate. Position 346-347 (346-347 (AR)) interacts with FMN.

This sequence belongs to the NADH:flavin oxidoreductase/NADH oxidase family.

Functionally, NADH-dependent flavin oxidoreductase; part of the gene cluster that mediates the biosynthesis of ilicicolin H, a 4-hydroxy-2-pyridonealkaloid that has potent and broad antifungal activities by inhibiting the mitochondrial respiration chain. The biosynthesis of ilicicolin H starts with formation of the tetramic acid by the hybrid PKS-NRPS synthetase iliA with the partnering trans-enoyl reductase iliB since iliA lacks a designated enoylreductase (ER) domain. The cytochrome P450 monooxygenase iliC then catalyzes the ring expansion of the tetramate to the acyclic 2-pyridone. The pericyclase iliD further converts the acyclic 2-pyridone into 8-epi-ilicicolin H. 8-epi-ilicicolin H might then spontaneously convert to ilicicolin H since ilicicolin H is produced in the absence of the epimerase iliE, in contrast to what was observed for the Talaromyces variabilis ilicolin H biosynthetic pathway. The sequence is that of NADH-dependent flavin oxidoreductase iliE from Hypocrea jecorina (strain QM6a) (Trichoderma reesei).